A 392-amino-acid polypeptide reads, in one-letter code: tRNA (guanine-N(7)-)-methyltransferase (392 aa).

The S-adenosyl-L-methionine site is built by Glu123, Glu148, and Asp175. Substrate-binding residues include Lys201 and Asp231.

This sequence belongs to the class I-like SAM-binding methyltransferase superfamily. TrmB family.

It carries out the reaction guanosine(46) in tRNA + S-adenosyl-L-methionine = N(7)-methylguanosine(46) in tRNA + S-adenosyl-L-homocysteine. The protein operates within tRNA modification; N(7)-methylguanine-tRNA biosynthesis. In terms of biological role, catalyzes the formation of N(7)-methylguanine at position 46 (m7G46) in tRNA. This is tRNA (guanine-N(7)-)-methyltransferase from Campylobacter jejuni subsp. jejuni serotype O:2 (strain ATCC 700819 / NCTC 11168).